A 405-amino-acid chain; its full sequence is Riboflavin biosynthesis protein RibBA (405 aa).

Positions M1–R205 are DHBP synthase. Residues R30 to E31, D35, R144 to T148, and E168 each bind D-ribulose 5-phosphate. Mg(2+) is bound at residue E31. H147 lines the Mg(2+) pocket. Residues T206–K405 form a GTP cyclohydrolase II region. Residue R256 to S260 coordinates GTP. C261, C272, and C274 together coordinate Zn(2+). GTP-binding positions include Q277, E299–R301, and T321. D333 acts as the Proton acceptor; for GTP cyclohydrolase activity in catalysis. The active-site Nucleophile; for GTP cyclohydrolase activity is R335. Residues S356 and K361 each coordinate GTP.

In the N-terminal section; belongs to the DHBP synthase family. It in the C-terminal section; belongs to the GTP cyclohydrolase II family. Mg(2+) serves as cofactor. It depends on Mn(2+) as a cofactor. The cofactor is Zn(2+).

It catalyses the reaction D-ribulose 5-phosphate = (2S)-2-hydroxy-3-oxobutyl phosphate + formate + H(+). It carries out the reaction GTP + 4 H2O = 2,5-diamino-6-hydroxy-4-(5-phosphoribosylamino)-pyrimidine + formate + 2 phosphate + 3 H(+). It functions in the pathway cofactor biosynthesis; riboflavin biosynthesis; 2-hydroxy-3-oxobutyl phosphate from D-ribulose 5-phosphate: step 1/1. It participates in cofactor biosynthesis; riboflavin biosynthesis; 5-amino-6-(D-ribitylamino)uracil from GTP: step 1/4. Its function is as follows. Catalyzes the conversion of D-ribulose 5-phosphate to formate and 3,4-dihydroxy-2-butanone 4-phosphate. Functionally, catalyzes the conversion of GTP to 2,5-diamino-6-ribosylamino-4(3H)-pyrimidinone 5'-phosphate (DARP), formate and pyrophosphate. The protein is Riboflavin biosynthesis protein RibBA of Parabacteroides distasonis (strain ATCC 8503 / DSM 20701 / CIP 104284 / JCM 5825 / NCTC 11152).